Reading from the N-terminus, the 476-residue chain is Abscisic acid 8'-hydroxylase CYP707A1 (476 aa).

Residues 5 to 25 (FEIFLYISMFVLGYLSYYFCF) form a helical membrane-spanning segment. Cysteine 422 contributes to the heme binding site.

The protein belongs to the cytochrome P450 family. Requires heme as cofactor. As to expression, expressed in ovaries (specifically in ovules and placenta), sepals, petals and pedicels.

It localises to the membrane. The enzyme catalyses 2-cis-(+)-abscisate + reduced [NADPH--hemoprotein reductase] + O2 = (+)-8'-hydroxyabscisate + oxidized [NADPH--hemoprotein reductase] + H2O + H(+). It participates in plant hormone degradation; abscisic acid degradation. Involved in the oxidative degradation of abscisic acid, especially in pollinated ovaries. In Solanum lycopersicum (Tomato), this protein is Abscisic acid 8'-hydroxylase CYP707A1.